Reading from the N-terminus, the 66-residue chain is Phylloseptin-H5 (66 aa).

The signal sequence occupies residues 1 to 22; sequence MAFLKKSLFLVLFLGLVSLSIC. Residues 23 to 44 constitute a propeptide that is removed on maturation; it reads EEEKRETEEEENEQEDDDKSEE. The segment at 24 to 44 is disordered; that stretch reads EEKRETEEEENEQEDDDKSEE. A compositionally biased stretch (acidic residues) spans 30–41; that stretch reads EEEENEQEDDDK. Phenylalanine amide is present on Phe65.

As to expression, expressed by the skin glands.

Its subcellular location is the secreted. Functionally, has antibacterial activity against the Gram-negative bacteria E.coli and P.aeruginosa, and the Gram-positive bacterium S.aureus. No hemolytic activity. The sequence is that of Phylloseptin-H5 (psn7) from Pithecopus hypochondrialis (Orange-legged leaf frog).